The primary structure comprises 257 residues: Putative hydro-lyase YcsI (257 aa).

This sequence belongs to the D-glutamate cyclase family.

In Bacillus subtilis (strain 168), this protein is Putative hydro-lyase YcsI (ycsI).